We begin with the raw amino-acid sequence, 433 residues long: Enolase (433 aa).

Residue Gln-166 participates in (2R)-2-phosphoglycerate binding. Glu-208 (proton donor) is an active-site residue. 3 residues coordinate Mg(2+): Asp-245, Glu-289, and Asp-316. 4 residues coordinate (2R)-2-phosphoglycerate: Lys-341, Arg-370, Ser-371, and Lys-392. The active-site Proton acceptor is Lys-341.

It belongs to the enolase family. The cofactor is Mg(2+).

It is found in the cytoplasm. The protein localises to the secreted. It localises to the cell surface. The enzyme catalyses (2R)-2-phosphoglycerate = phosphoenolpyruvate + H2O. The protein operates within carbohydrate degradation; glycolysis; pyruvate from D-glyceraldehyde 3-phosphate: step 4/5. Its function is as follows. Catalyzes the reversible conversion of 2-phosphoglycerate (2-PG) into phosphoenolpyruvate (PEP). It is essential for the degradation of carbohydrates via glycolysis. This chain is Enolase, found in Acetivibrio thermocellus (strain ATCC 27405 / DSM 1237 / JCM 9322 / NBRC 103400 / NCIMB 10682 / NRRL B-4536 / VPI 7372) (Clostridium thermocellum).